Consider the following 561-residue polypeptide: Oligo-1,6-glucosidase 1 (561 aa).

Positions 20, 22, 24, 26, and 28 each coordinate Ca(2+). The Nucleophile role is filled by Asp-199. Glu-255 serves as the catalytic Proton donor.

Belongs to the glycosyl hydrolase 13 family.

The protein localises to the cytoplasm. The catalysed reaction is Hydrolysis of (1-&gt;6)-alpha-D-glucosidic linkages in some oligosaccharides produced from starch and glycogen by alpha-amylase, and in isomaltose.. Functionally, hydrolyzes various disaccharides such as sucrose, maltose, and isomaltose with different efficiencies. Also hydrolyzes longer maltodextrins from maltotriose up to maltohexaose, but not maltoheptaose, palatinose, isomaltotriose, or isomaltotetraose. In Bacillus subtilis (strain 168), this protein is Oligo-1,6-glucosidase 1 (malL).